A 777-amino-acid chain; its full sequence is Probable aconitate hydratase, mitochondrial (777 aa).

The N-terminal 26 residues, 1–26, are a transit peptide targeting the mitochondrion; the sequence is MNSLLRLSHLAGPAHYRALHSSSSIW. Substrate-binding positions include glutamine 96 and 189-191; that span reads DSH. Cysteine 382, cysteine 445, and cysteine 448 together coordinate [4Fe-4S] cluster. Substrate contacts are provided by arginine 471 and arginine 476. Positions 534 to 555 are disordered; that stretch reads YDPGEDTFQAPSGSGQVDVSPS. The span at 542 to 555 shows a compositional bias: polar residues; it reads QAPSGSGQVDVSPS. Substrate contacts are provided by residues arginine 601 and 664–665; that span reads SR.

The protein belongs to the aconitase/IPM isomerase family. In terms of assembly, monomer. Requires [4Fe-4S] cluster as cofactor.

The protein resides in the mitochondrion. It carries out the reaction citrate = D-threo-isocitrate. It functions in the pathway carbohydrate metabolism; tricarboxylic acid cycle; isocitrate from oxaloacetate: step 2/2. In terms of biological role, catalyzes the isomerization of citrate to isocitrate via cis-aconitate. In Caenorhabditis elegans, this protein is Probable aconitate hydratase, mitochondrial.